Consider the following 430-residue polypeptide: Uric acid permease PucK (430 aa).

14 helical membrane passes run 18 to 38, 43 to 63, 67 to 87, 97 to 117, 122 to 142, 163 to 183, 185 to 205, 209 to 229, 233 to 253, 274 to 294, 310 to 330, 333 to 353, 369 to 389, and 398 to 418; these read MLAM…AIGL, LTYL…LQLW, YFGI…GPMI, AIYG…GFFG, FFPP…LIPT, LLGF…KGFI, SIAI…MGKV, EVLE…PPTF, AVVT…GVYF, AEGL…TAFS, VIAI…AAAL, VIPT…VISY, LLII…PALF, and VLAG…HAFF.

The protein belongs to the nucleobase:cation symporter-2 (NCS2) (TC 2.A.40) family.

The protein localises to the cell membrane. In terms of biological role, uptake of uric acid. The sequence is that of Uric acid permease PucK (pucK) from Bacillus subtilis (strain 168).